The primary structure comprises 218 residues: Small ribosomal subunit protein uS3c (218 aa).

The region spanning 47 to 118 (VQKNIRISSG…KLNIAITRIS (72 aa)) is the KH type-2 domain.

The protein belongs to the universal ribosomal protein uS3 family. Part of the 30S ribosomal subunit.

The protein resides in the plastid. Its subcellular location is the chloroplast. This chain is Small ribosomal subunit protein uS3c (rps3), found in Arabis hirsuta (Hairy rock-cress).